The chain runs to 783 residues: Protein SEY1 (783 aa).

Residues 1 to 677 lie on the Cytoplasmic side of the membrane; sequence MTSQAIQLID…KRSIVTSSTH (677 aa). The region spanning 33–265 is the GB1/RHD3-type G domain; that stretch reads GFNYHVISVF…YLLKPNYHHK (233 aa). 43–50 provides a ligand contact to GTP; the sequence is GSQSSGKS. Positions 449-472 form a coiled coil; the sequence is HEKKLQLRESELNALLSKIKKQLT. The chain crosses the membrane as a helical span at residues 678–698; it reads IPIWIYAVIVVLGWNEFMIVI. Topologically, residues 699–701 are lumenal; sequence RNP. Residues 702–722 traverse the membrane as a helical segment; the sequence is LFVTLALLSIVSFYFIQKFGL. Over 723–783 the chain is Cytoplasmic; the sequence is WGPVMNVVNT…SSSSGNEDSD (61 aa).

Belongs to the TRAFAC class dynamin-like GTPase superfamily. GB1/RHD3 GTPase family. RHD3 subfamily.

The protein localises to the endoplasmic reticulum membrane. In terms of biological role, cooperates with the reticulon proteins and tubule-shaping DP1 family proteins to generate and maintain the structure of the tubular endoplasmic reticulum network. Has GTPase activity, which is required for its function in ER organization. The polypeptide is Protein SEY1 (Candida glabrata (strain ATCC 2001 / BCRC 20586 / JCM 3761 / NBRC 0622 / NRRL Y-65 / CBS 138) (Yeast)).